The sequence spans 330 residues: tRNA-modifying protein YgfZ (330 aa).

Trp28 and Trp190 together coordinate folate.

This sequence belongs to the tRNA-modifying YgfZ family.

The protein localises to the cytoplasm. Functionally, folate-binding protein involved in regulating the level of ATP-DnaA and in the modification of some tRNAs. It is probably a key factor in regulatory networks that act via tRNA modification, such as initiation of chromosomal replication. This Yersinia pseudotuberculosis serotype O:1b (strain IP 31758) protein is tRNA-modifying protein YgfZ.